The sequence spans 360 residues: A-type ATP synthase subunit C (360 aa).

The segment at 1 to 23 (MRLLERLWGKKPSRKSDKKKKGT) is disordered. The segment covering 9–22 (GKKPSRKSDKKKKG) has biased composition (basic residues).

The protein belongs to the V-ATPase V0D/AC39 subunit family. As to quaternary structure, has multiple subunits with at least A(3), B(3), C, D, E, F, H, I and proteolipid K(x).

Its subcellular location is the cell membrane. Functionally, component of the A-type ATP synthase that produces ATP from ADP in the presence of a proton gradient across the membrane. This is A-type ATP synthase subunit C from Methanosarcina acetivorans (strain ATCC 35395 / DSM 2834 / JCM 12185 / C2A).